A 59-amino-acid polypeptide reads, in one-letter code: uncharacterized protein (59 aa).

2 stretches are compositionally biased toward basic and acidic residues: residues 1-23 (MAEHRGGSGNFAEDREKASDAGR) and 36-45 (DPQRASEAGK). A disordered region spans residues 1-59 (MAEHRGGSGNFAEDREKASDAGRKGGQHSGGNFKNDPQRASEAGKKGGQQSGGNKSGKS). Over residues 46–59 (KGGQQSGGNKSGKS) the composition is skewed to gly residues.

The protein belongs to the con-10 family.

This is an uncharacterized protein from Escherichia coli (strain K12).